We begin with the raw amino-acid sequence, 205 residues long: Large ribosomal subunit protein uL13 (205 aa).

Belongs to the universal ribosomal protein uL13 family.

The sequence is that of Large ribosomal subunit protein uL13 (RPL13A) from Lupinus luteus (European yellow lupine).